We begin with the raw amino-acid sequence, 357 residues long: 3-isopropylmalate dehydrogenase (357 aa).

Positions 97, 107, 135, and 224 each coordinate substrate. Aspartate 224, aspartate 248, and aspartate 252 together coordinate Mg(2+). An NAD(+)-binding site is contributed by 282 to 294; sequence GSAPDIAGQDKAN.

This sequence belongs to the isocitrate and isopropylmalate dehydrogenases family. LeuB type 1 subfamily. Homodimer. Requires Mg(2+) as cofactor. The cofactor is Mn(2+).

It localises to the cytoplasm. The catalysed reaction is (2R,3S)-3-isopropylmalate + NAD(+) = 4-methyl-2-oxopentanoate + CO2 + NADH. Its pathway is amino-acid biosynthesis; L-leucine biosynthesis; L-leucine from 3-methyl-2-oxobutanoate: step 3/4. Its function is as follows. Catalyzes the oxidation of 3-carboxy-2-hydroxy-4-methylpentanoate (3-isopropylmalate) to 3-carboxy-4-methyl-2-oxopentanoate. The product decarboxylates to 4-methyl-2 oxopentanoate. This chain is 3-isopropylmalate dehydrogenase, found in Synechococcus sp. (strain CC9605).